Consider the following 405-residue polypeptide: Probable tRNA sulfurtransferase (405 aa).

The THUMP domain maps to 60–165 (DAVINRLKKV…SNGIFLTSEV (106 aa)). ATP contacts are provided by residues 183–184 (ML), 208–209 (HF), Arg-265, Gly-287, and Gln-296.

This sequence belongs to the ThiI family.

It is found in the cytoplasm. It catalyses the reaction [ThiI sulfur-carrier protein]-S-sulfanyl-L-cysteine + a uridine in tRNA + 2 reduced [2Fe-2S]-[ferredoxin] + ATP + H(+) = [ThiI sulfur-carrier protein]-L-cysteine + a 4-thiouridine in tRNA + 2 oxidized [2Fe-2S]-[ferredoxin] + AMP + diphosphate. It carries out the reaction [ThiS sulfur-carrier protein]-C-terminal Gly-Gly-AMP + S-sulfanyl-L-cysteinyl-[cysteine desulfurase] + AH2 = [ThiS sulfur-carrier protein]-C-terminal-Gly-aminoethanethioate + L-cysteinyl-[cysteine desulfurase] + A + AMP + 2 H(+). It functions in the pathway cofactor biosynthesis; thiamine diphosphate biosynthesis. Catalyzes the ATP-dependent transfer of a sulfur to tRNA to produce 4-thiouridine in position 8 of tRNAs, which functions as a near-UV photosensor. Also catalyzes the transfer of sulfur to the sulfur carrier protein ThiS, forming ThiS-thiocarboxylate. This is a step in the synthesis of thiazole, in the thiamine biosynthesis pathway. The sulfur is donated as persulfide by IscS. This Pediococcus pentosaceus (strain ATCC 25745 / CCUG 21536 / LMG 10740 / 183-1w) protein is Probable tRNA sulfurtransferase.